A 64-amino-acid polypeptide reads, in one-letter code: U-scoloptoxin(14)-Er1a (64 aa).

Residues 1 to 23 (MRPSFPLLLIMLLVCTAHHMVSG) form the signal peptide.

This sequence belongs to the scoloptoxin-14 family. Contains 4 disulfide bonds. As to expression, expressed by the venom gland.

The protein resides in the secreted. In Ethmostigmus rubripes (Giant centipede), this protein is U-scoloptoxin(14)-Er1a.